A 245-amino-acid polypeptide reads, in one-letter code: Cysteine-rich secretory protein 3 (245 aa).

Residues 1–20 form the signal peptide; sequence MTLFPVLLFLVAGLLPSFPA. The 129-residue stretch at 43-171 folds into the SCP domain; sequence VNKHNELRRA…VLKYYYVCQY (129 aa). Cystine bridges form between Cys191–Cys198, Cys194–Cys203, Cys207–Cys240, Cys216–Cys234, and Cys225–Cys238. Residues 207 to 240 form the ShKT domain; sequence CKYEDLYSNCKSLKLTLTCKHQLVRDSCKASCNC. Residue Asn239 is glycosylated (N-linked (GlcNAc...) asparagine).

Belongs to the CRISP family. Interacts with A1BG. In terms of tissue distribution, salivary gland, pancreas and prostate &gt; epididymis, ovary, thymus and colon.

The protein localises to the secreted. The protein is Cysteine-rich secretory protein 3 (CRISP3) of Homo sapiens (Human).